The chain runs to 94 residues: RING finger protein Z (94 aa).

A compositionally biased stretch (polar residues) spans 1 to 19 (MGNCNGASKSNQPDSSRVT). The segment at 1 to 20 (MGNCNGASKSNQPDSSRVTQ) is disordered. Glycine 2 is lipidated: N-myristoyl glycine; by host. The RING-type; atypical zinc-finger motif lies at 39–75 (CKCCWFADTNLITCNDHYLCLRCHQVMLRNSDLCNIC). The short motif at 89–92 (PTAP) is the PTAP/PSAP motif element.

The protein belongs to the arenaviridae Z protein family. In terms of assembly, interacts with protein NP; this interaction probably directs the encapsidated genome to budding sites. Interacts (via RING domain) with polymerase L; this interaction inhibits viral transcription and replication, Z partially blocks the product exit tunnel for the releasing nascent RNA product. Interacts with the glycoprotein complex; this interaction plays a role in virion budding. Interacts with host eIF4E; this interaction results in eIF4E reduced affinity for its substrate, the 5'-m7 G cap structure. Interacts (via late-budding domain) with host TSG101; this interaction is essential for budding and release of viral particles. Interacts with host RPLP0; this interaction may serve to load ribosome-like particles inside the virion. Interacts with host PML; this interaction induces PML bodies redistribution in the cytoplasm upon viral infection. Myristoylation is required for the role of RING finger protein Z in assembly and budding.

The protein resides in the virion. Its subcellular location is the host cytoplasm. It is found in the host perinuclear region. The protein localises to the host cell membrane. Functionally, plays a crucial role in virion assembly and budding. Expressed late in the virus life cycle, it acts as an inhibitor of viral transcription and RNA synthesis by interacting with the viral polymerase L. Presumably recruits the NP encapsidated genome to cellular membranes at budding sites via direct interaction with NP. Plays critical roles in the final steps of viral release by interacting with host TSG101, a member of the vacuolar protein-sorting pathway and using other cellular host proteins involved in vesicle formation pathway. The budding of the virus progeny occurs after association of protein Z with the viral glycoprotein complex SSP-GP1-GP2 at the cell periphery, step that requires myristoylation of protein Z. Also selectively represses protein production by associating with host eIF4E. In cell-based minigenome assay, has an inhibitory effect on the ribonucleoprotein machinery (vRNP), which is responsible for the replication and transcription of the viral genome. This Akodon azarae (Azara's grass mouse) protein is RING finger protein Z.